The primary structure comprises 432 residues: Glutamate-1-semialdehyde 2,1-aminomutase 1 (432 aa).

Lysine 268 carries the N6-(pyridoxal phosphate)lysine modification.

The protein belongs to the class-III pyridoxal-phosphate-dependent aminotransferase family. HemL subfamily. Homodimer. Pyridoxal 5'-phosphate is required as a cofactor.

The protein resides in the cytoplasm. The catalysed reaction is (S)-4-amino-5-oxopentanoate = 5-aminolevulinate. The protein operates within porphyrin-containing compound metabolism; protoporphyrin-IX biosynthesis; 5-aminolevulinate from L-glutamyl-tRNA(Glu): step 2/2. The sequence is that of Glutamate-1-semialdehyde 2,1-aminomutase 1 from Bacillus cereus (strain ZK / E33L).